The chain runs to 432 residues: Asparagine--tRNA ligase (432 aa).

It belongs to the class-II aminoacyl-tRNA synthetase family. In terms of assembly, homodimer.

The protein resides in the cytoplasm. It carries out the reaction tRNA(Asn) + L-asparagine + ATP = L-asparaginyl-tRNA(Asn) + AMP + diphosphate + H(+). In Lactobacillus johnsonii (strain CNCM I-12250 / La1 / NCC 533), this protein is Asparagine--tRNA ligase.